The chain runs to 708 residues: Radial spoke head protein 6 homolog A (708 aa).

Disordered regions lie at residues 1–94 (MGEP…GYTP), 376–407 (ETHGEEEGEEDEEKVVDSVPKPQWKPPPIIPK), 495–514 (EEEGDEEEEGGAGRDSFEEN), and 663–708 (GPEI…DLED). Residues 10–32 (PSQTRRASQGSERARSQEYSQPL) are compositionally biased toward polar residues. Low complexity predominate over residues 47–56 (RGSRSSQGSQ). The segment covering 495 to 504 (EEEGDEEEEG) has biased composition (acidic residues). A compositionally biased stretch (low complexity) spans 680-690 (LKAAQEQALAA). Residues 691-708 (AEEEEEDEEEEEDEDLED) show a composition bias toward acidic residues.

It belongs to the flagellar radial spoke RSP4/6 family. Component of the axonemal radial spoke 1 (RS1) and 2 (RS2) complexes, at least composed of spoke head proteins RSPH1, RSPH3, RSPH9 and the cilia-specific component RSPH4A or sperm-specific component RSPH6A, spoke stalk proteins RSPH14, DNAJB13, DYDC1, ROPN1L and NME5, and the RS1 complex-specific anchor protein IQUB. Interacts with RSPH1. Interacts with RSPH3B. Interacts with RSPH4A. Interacts with RSPH9. Interacts with RSPH10B. Phosphorylated by PKA. Phosphorylation increases in capacitated sperm. As to expression, expressed in sperm and testis (at protein level).

Its subcellular location is the cytoplasm. The protein resides in the cytoskeleton. It is found in the flagellum axoneme. Functionally, functions as part of radial spoke complexes in the axoneme of sperm flagella that play an important part in motility. The triple radial spokes (RS1, RS2 and RS3) are required to modulate beating of the sperm flagellum. The polypeptide is Radial spoke head protein 6 homolog A (Mus musculus (Mouse)).